A 570-amino-acid chain; its full sequence is Protein NRT1/ PTR FAMILY 8.2 (570 aa).

Position 99 is a phosphothreonine (T99). 10 consecutive transmembrane segments (helical) span residues 100–120, 136–156, 182–202, 210–230, 335–355, 370–390, 414–434, 454–474, 493–513, and 537–557; these read IASF…SASV, AGQT…TGGI, FFNW…SVLV, WGWG…FFFA, IWAT…VFVL, IPSA…APVY, IGIG…LEVA, IFWQ…TFIG, ALSL…VTLV, and YFFW…LWIA.

The protein belongs to the major facilitator superfamily. Proton-dependent oligopeptide transporter (POT/PTR) (TC 2.A.17) family. As to expression, expressed in developing and germinating pollen grains and ovules.

It localises to the cell membrane. Peptide transporter. Mediates the transport of di- and tripeptides. High affinity transporter. Involved in the uptake of peptides during pollen germination and tube growth. The chain is Protein NRT1/ PTR FAMILY 8.2 (NPF8.2) from Arabidopsis thaliana (Mouse-ear cress).